The sequence spans 189 residues: Peptidyl-tRNA hydrolase (189 aa).

TRNA is bound at residue Y15. Residue H20 is the Proton acceptor of the active site. 3 residues coordinate tRNA: F66, N68, and N114.

The protein belongs to the PTH family. As to quaternary structure, monomer.

It is found in the cytoplasm. It catalyses the reaction an N-acyl-L-alpha-aminoacyl-tRNA + H2O = an N-acyl-L-amino acid + a tRNA + H(+). In terms of biological role, hydrolyzes ribosome-free peptidyl-tRNAs (with 1 or more amino acids incorporated), which drop off the ribosome during protein synthesis, or as a result of ribosome stalling. Functionally, catalyzes the release of premature peptidyl moieties from peptidyl-tRNA molecules trapped in stalled 50S ribosomal subunits, and thus maintains levels of free tRNAs and 50S ribosomes. The chain is Peptidyl-tRNA hydrolase from Streptococcus pneumoniae (strain CGSP14).